We begin with the raw amino-acid sequence, 279 residues long: Undecaprenyl-diphosphatase (279 aa).

The next 8 helical transmembrane spans lie at 2–22 (LIIE…TEWL), 44–64 (AFIE…VMLI), 85–105 (WQLW…AVPL), 113–133 (FYFM…FIWI), 163–183 (VLSI…AIIL), 188–208 (TVAA…YSGL), 223–243 (AQVL…LLAI), and 255–275 (FTIF…YSFF).

This sequence belongs to the UppP family.

The protein localises to the cell membrane. The catalysed reaction is di-trans,octa-cis-undecaprenyl diphosphate + H2O = di-trans,octa-cis-undecaprenyl phosphate + phosphate + H(+). Its function is as follows. Catalyzes the dephosphorylation of undecaprenyl diphosphate (UPP). Confers resistance to bacitracin. The chain is Undecaprenyl-diphosphatase from Streptococcus pyogenes serotype M12 (strain MGAS2096).